Reading from the N-terminus, the 372-residue chain is Chaperone protein DnaJ (372 aa).

In terms of domain architecture, J spans 5–70 (DYYDVLGVER…QKRANYDQYG (66 aa)). The CR-type zinc-finger motif lies at 130–208 (GTTKDIQINT…CHGDGRVHKK (79 aa)). Residues Cys-143, Cys-146, Cys-160, Cys-163, Cys-182, Cys-185, Cys-196, and Cys-199 each contribute to the Zn(2+) site. 4 CXXCXGXG motif repeats span residues 143-150 (CDSCDGSG), 160-167 (CSTCHGAG), 182-189 (CPSCHGSG), and 196-203 (CKSCHGDG).

This sequence belongs to the DnaJ family. As to quaternary structure, homodimer. It depends on Zn(2+) as a cofactor.

It localises to the cytoplasm. Participates actively in the response to hyperosmotic and heat shock by preventing the aggregation of stress-denatured proteins and by disaggregating proteins, also in an autonomous, DnaK-independent fashion. Unfolded proteins bind initially to DnaJ; upon interaction with the DnaJ-bound protein, DnaK hydrolyzes its bound ATP, resulting in the formation of a stable complex. GrpE releases ADP from DnaK; ATP binding to DnaK triggers the release of the substrate protein, thus completing the reaction cycle. Several rounds of ATP-dependent interactions between DnaJ, DnaK and GrpE are required for fully efficient folding. Also involved, together with DnaK and GrpE, in the DNA replication of plasmids through activation of initiation proteins. The sequence is that of Chaperone protein DnaJ from Pasteurella multocida (strain Pm70).